Here is a 94-residue protein sequence, read N- to C-terminus: Small ribosomal subunit protein uS17 (94 aa).

It belongs to the universal ribosomal protein uS17 family. As to quaternary structure, part of the 30S ribosomal subunit.

In terms of biological role, one of the primary rRNA binding proteins, it binds specifically to the 5'-end of 16S ribosomal RNA. This chain is Small ribosomal subunit protein uS17, found in Deinococcus geothermalis (strain DSM 11300 / CIP 105573 / AG-3a).